The chain runs to 267 residues: B3 domain-containing protein Os02g0455800 (267 aa).

Positions 30–131 (EKFLMPSDLC…RLFICCRLGT (102 aa)) form a DNA-binding region, TF-B3. Residues 172–221 (QARLHDGNQDGGGAPSRHVPSSGRRVEAQLSRVSSRRQRRTMKHSIPEPT) form a disordered region. A compositionally biased stretch (basic residues) spans 205-214 (SSRRQRRTMK).

The protein localises to the nucleus. The polypeptide is B3 domain-containing protein Os02g0455800 (Oryza sativa subsp. japonica (Rice)).